The chain runs to 273 residues: 2-dehydro-3-deoxyphosphooctonate aldolase (273 aa).

This sequence belongs to the KdsA family.

Its subcellular location is the cytoplasm. The catalysed reaction is D-arabinose 5-phosphate + phosphoenolpyruvate + H2O = 3-deoxy-alpha-D-manno-2-octulosonate-8-phosphate + phosphate. It functions in the pathway carbohydrate biosynthesis; 3-deoxy-D-manno-octulosonate biosynthesis; 3-deoxy-D-manno-octulosonate from D-ribulose 5-phosphate: step 2/3. The protein operates within bacterial outer membrane biogenesis; lipopolysaccharide biosynthesis. The polypeptide is 2-dehydro-3-deoxyphosphooctonate aldolase (Nitratidesulfovibrio vulgaris (strain DP4) (Desulfovibrio vulgaris)).